The following is a 358-amino-acid chain: tRNA-specific 2-thiouridylase MnmA (358 aa).

Residues 6-13 (ALSGGVDS) and methionine 32 contribute to the ATP site. Cysteine 103 acts as the Nucleophile in catalysis. Cysteine 103 and cysteine 201 are joined by a disulfide. Glycine 127 is a binding site for ATP. An interaction with tRNA region spans residues 151–153 (KDQ). Cysteine 201 (cysteine persulfide intermediate) is an active-site residue.

Belongs to the MnmA/TRMU family.

Its subcellular location is the cytoplasm. It catalyses the reaction S-sulfanyl-L-cysteinyl-[protein] + uridine(34) in tRNA + AH2 + ATP = 2-thiouridine(34) in tRNA + L-cysteinyl-[protein] + A + AMP + diphosphate + H(+). Its function is as follows. Catalyzes the 2-thiolation of uridine at the wobble position (U34) of tRNA, leading to the formation of s(2)U34. This chain is tRNA-specific 2-thiouridylase MnmA, found in Thermotoga petrophila (strain ATCC BAA-488 / DSM 13995 / JCM 10881 / RKU-1).